Here is a 579-residue protein sequence, read N- to C-terminus: Nif-specific regulatory protein (579 aa).

A GAF domain is found at 40–187 (DPVAEVPQIF…MVASLLEQAL (148 aa)). Positions 226 to 454 (IVGSSPAIAE…LENCVNRAAA (229 aa)) constitute a Sigma-54 factor interaction domain. Residues 254–261 (GESGTGKE) and 317–326 (ADGGTLFLDE) contribute to the ATP site. The inter-domain linker stretch occupies residues 464–536 (EELACRQGAC…PLRTKTAQLS (73 aa)). 2 residues coordinate a divalent metal cation: Cys468 and Cys473. The tract at residues 502 to 529 (RVSAPPPEPAPAPEPAPEAPPREEVPLR) is disordered. A run of 7 repeats spans residues 505–506 (AP), 507–508 (PP), 509–510 (EP), 511–512 (AP), 513–514 (AP), 515–516 (EP), and 517–518 (AP). The interval 505-518 (APPPEPAPAPEPAP) is 7 X 2 AA tandem repeats of X-P. Positions 505 to 520 (APPPEPAPAPEPAPEA) are enriched in pro residues. The segment at 537–579 (REELLRALESAGWVQAKAARLLGMTPRQIAYALQKFEIELRKI) is C-terminal DNA-binding domain. Residues 551–570 (QAKAARLLGMTPRQIAYALQ) constitute a DNA-binding region (H-T-H motif).

In terms of assembly, interacts with sigma-54.

Required for activation of most nif operons, which are directly involved in nitrogen fixation. This is Nif-specific regulatory protein (nifA1) from Rhodobacter capsulatus (Rhodopseudomonas capsulata).